Reading from the N-terminus, the 229-residue chain is Small ribosomal subunit protein uS3 (229 aa).

Residues 39 to 107 (VRKFLEKKLK…PAQINIAEIR (69 aa)) enclose the KH type-2 domain.

This sequence belongs to the universal ribosomal protein uS3 family. In terms of assembly, part of the 30S ribosomal subunit. Forms a tight complex with proteins S10 and S14.

In terms of biological role, binds the lower part of the 30S subunit head. Binds mRNA in the 70S ribosome, positioning it for translation. This is Small ribosomal subunit protein uS3 from Shewanella loihica (strain ATCC BAA-1088 / PV-4).